The sequence spans 456 residues: Equilibrative nucleoside transporter 1 (456 aa).

At 2-12 (TTSHQPQDRYK) the chain is on the cytoplasmic side. Residues 13-29 (AVWLIFFMLGLGTLLPW) form a helical membrane-spanning segment. Topologically, residues 30–82 (NFFMTATQYFTNRLDMSQNVSLVTAELSKDAQASAAPAAPLPERNSLSAIFNN) are extracellular. A glycan (N-linked (GlcNAc...) asparagine) is linked at Asn-48. Residues 83 to 107 (VMTLCAMLPLLLFTYLNSFLHQRIP) traverse the membrane as a helical segment. The Cytoplasmic portion of the chain corresponds to 108–111 (QSVR). A helical transmembrane segment spans residues 112–130 (ILGSLVAILLVFLITAILV). The Extracellular segment spans residues 131-138 (KVQLDALP). Residues 139–157 (FFVITMIKIVLINSFGAIL) form a helical membrane-spanning segment. The Cytoplasmic segment spans residues 158 to 174 (QGSLFGLAGLLPASYTA). A helical membrane pass occupies residues 175–199 (PIMSGQGLAGFFASVAMICAIASGS). At 200–206 (ELSESAF) the chain is on the extracellular side. A helical transmembrane segment spans residues 207-227 (GYFITACAVIILTIICYLGLP). The Cytoplasmic portion of the chain corresponds to 228-291 (RLEFYRYYQQ…IKAILKNISV (64 aa)). Residues Ser-254, Ser-269, and Ser-273 each carry the phosphoserine modification. Over residues 254–266 (SKGEEPRAGKEES) the composition is skewed to basic and acidic residues. The interval 254 to 276 (SKGEEPRAGKEESGVSVSNSQPT) is disordered. Residues 292-311 (LAFSVCFIFTITIGMFPAVT) traverse the membrane as a helical segment. Over 312 to 323 (VEVKSSIAGSST) the chain is Extracellular. Residues 324–342 (WERYFIPVSCFLTFNIFDW) form a helical membrane-spanning segment. The Cytoplasmic portion of the chain corresponds to 343 to 359 (LGRSLTAVFMWPGKDSR). A helical membrane pass occupies residues 360–378 (WLPSLVLARLVFVPLLLLC). Residues 379-393 (NIKPRRYLTVVFEHD) lie on the Extracellular side of the membrane. Residues 394 to 413 (AWFIFFMAAFAFSNGYLASL) form a helical membrane-spanning segment. Topologically, residues 414 to 431 (CMCFGPKKVKPAEAETAG) are cytoplasmic. Residues 432 to 452 (AIMAFFLCLGLALGAVFSFLF) form a helical membrane-spanning segment. Topologically, residues 453–456 (RAIV) are extracellular.

Belongs to the SLC29A/ENT transporter (TC 2.A.57) family. As to quaternary structure, identified in a complex with STOM. Post-translationally, glycosylated. As to expression, expressed in testis at the blood-testis barrier (at protein level). Detected in erythrocytes (at protein level). Expressed at relatively high levels in cerebral cortex, particularly the frontal and parietal lobes, and the thalamus and basal ganglia (at protein level). In the midbrain expressed at moderate levels, whereas in the other areas of the brainstem, namely medulla and pons, cerebellum and the hippocampus expressed at lower amounts when compared to the other brain regions (at protein level). Expressed in Langerhans cells and lymphocytes in the pancreas (at protein level). Expressed in kidney, in polarized renal epithelial cells. Expressed in adipose tissues. Expressed in placenta. Expressed in small intestine.

It is found in the basolateral cell membrane. The protein localises to the apical cell membrane. It localises to the cell membrane. The catalysed reaction is adenosine(in) = adenosine(out). The enzyme catalyses guanosine(in) = guanosine(out). It catalyses the reaction inosine(in) = inosine(out). It carries out the reaction uridine(out) = uridine(in). The catalysed reaction is thymidine(in) = thymidine(out). The enzyme catalyses cytidine(in) = cytidine(out). It catalyses the reaction adenine(out) = adenine(in). It carries out the reaction guanine(out) = guanine(in). The catalysed reaction is thymine(out) = thymine(in). The enzyme catalyses uracil(in) = uracil(out). It catalyses the reaction hypoxanthine(out) = hypoxanthine(in). With respect to regulation, transporter activity is sensitive to low concentrations of the inhibitor nitrobenzylmercaptopurine riboside (NBMPR). Inhibited by dilazep. Inhibited by dipyridamole. Inhibited by hypoxanthine. Inhibited by azidothymidine (AZT). Inhibited by dideoxycytidine (ddC). Inhibited by dideoxyinosine (ddI). Inhibited by draflazine. Inhibited by soluflazine. Inhibited by cladribine. Inhibited by capecitabine. Inhibited by clofarabine. Inhibited by ribavirin. Modestly inhibited by acyclovir. Modestly inhibited by 5-fluorouracil. Uniporter involved in the facilitative transport of nucleosides and nucleobases, and contributes to maintaining their cellular homeostasis. Functions as a Na(+)-independent transporter. Involved in the transport of nucleosides such as adenosine, guanosine, inosine, uridine, thymidine and cytidine. Also transports purine nucleobases (hypoxanthine, adenine, guanine) and pyrimidine nucleobases (thymine, uracil). Mediates basolateral nucleoside uptake into Sertoli cells, thereby regulating the transport of nucleosides in testis across the blood-testis barrier. Regulates inosine levels in brown adipocytes tissues (BAT) and extracellular inosine levels, which controls BAT-dependent energy expenditure. The protein is Equilibrative nucleoside transporter 1 of Homo sapiens (Human).